The primary structure comprises 190 residues: Peptidyl-tRNA hydrolase (190 aa).

F14 is a tRNA binding site. The Proton acceptor role is filled by H19. Residues M64, N66, and N112 each coordinate tRNA.

This sequence belongs to the PTH family. As to quaternary structure, monomer.

Its subcellular location is the cytoplasm. The catalysed reaction is an N-acyl-L-alpha-aminoacyl-tRNA + H2O = an N-acyl-L-amino acid + a tRNA + H(+). In terms of biological role, hydrolyzes ribosome-free peptidyl-tRNAs (with 1 or more amino acids incorporated), which drop off the ribosome during protein synthesis, or as a result of ribosome stalling. Catalyzes the release of premature peptidyl moieties from peptidyl-tRNA molecules trapped in stalled 50S ribosomal subunits, and thus maintains levels of free tRNAs and 50S ribosomes. The polypeptide is Peptidyl-tRNA hydrolase (Staphylococcus aureus (strain bovine RF122 / ET3-1)).